A 64-amino-acid chain; its full sequence is Large ribosomal subunit protein bL35 (64 aa).

The segment at Met1 to Tyr28 is disordered.

The protein belongs to the bacterial ribosomal protein bL35 family.

This is Large ribosomal subunit protein bL35 from Cytophaga hutchinsonii (strain ATCC 33406 / DSM 1761 / CIP 103989 / NBRC 15051 / NCIMB 9469 / D465).